The chain runs to 339 residues: tRNA N6-adenosine threonylcarbamoyltransferase (339 aa).

H111 and H115 together coordinate Fe cation. Substrate-binding positions include 134-138 (LVSGG), D167, G180, and N272. Residue D300 coordinates Fe cation.

Belongs to the KAE1 / TsaD family. The cofactor is Fe(2+).

It localises to the cytoplasm. It carries out the reaction L-threonylcarbamoyladenylate + adenosine(37) in tRNA = N(6)-L-threonylcarbamoyladenosine(37) in tRNA + AMP + H(+). In terms of biological role, required for the formation of a threonylcarbamoyl group on adenosine at position 37 (t(6)A37) in tRNAs that read codons beginning with adenine. Is involved in the transfer of the threonylcarbamoyl moiety of threonylcarbamoyl-AMP (TC-AMP) to the N6 group of A37, together with TsaE and TsaB. TsaD likely plays a direct catalytic role in this reaction. The sequence is that of tRNA N6-adenosine threonylcarbamoyltransferase from Sodalis glossinidius (strain morsitans).